We begin with the raw amino-acid sequence, 889 residues long: Disease resistance protein RPS5 (889 aa).

Gly-2 carries the N-myristoyl glycine lipid modification. Cys-4 carries S-palmitoyl cysteine lipidation. Residues 29 to 58 adopt a coiled-coil conformation; sequence IHNLSKNLASLQKAMRMLKARQYDVIRRLE. Positions 140–444 constitute an NB-ARC domain; it reads SEATPFADVD…SEGFINEKEG (305 aa). 183–190 is a binding site for ATP; sequence GMGGVGKT. LRR repeat units follow at residues 518–539, 540–561, 564–586, 588–610, 611–633, and 634–656; these read TVRKISLMNNEIEEIFDSHECA, ALTTLFLQKNDVVKISAEFFRC, HLVVLDLSENQSLNELPEEISEL, SLRYFNLSYTCIHQLPVGLWTLK, KLIHLNLEHMSSLGSILGISNLW, and NLRTLGLRDSRLLLDMSLVKELQ.

It belongs to the disease resistance NB-LRR family. As to quaternary structure, in uninfected plants, interacts with PBS1 through the coiled coil domain. Homodimer.

It localises to the cell membrane. Its function is as follows. Disease resistance (R) protein that specifically recognizes the avrPphB type III effector avirulence protein from Pseudomonas syringae. Also confers resistance against Hyaloperonospora parasitica (downy mildew). Resistance proteins guard the plant against pathogens that contain an appropriate avirulence protein via an indirect interaction with this avirulence protein. That triggers a defense system including the hypersensitive response, which restricts the pathogen growth. Requires PBS1 to trigger the defense reaction against avrPphB. In case of infection by Pseudomonas syringae, AvrPphB triggers RPS5-mediated defense mechanism via the cleavage of PBS1, suggesting that the cleavage of PBS1 could trigger an exchange of ADP for ATP, thereby activating RPS5. May function as a fine-tuned sensor of alterations in the structure of the effector target PBS1. This is Disease resistance protein RPS5 (RPS5) from Arabidopsis thaliana (Mouse-ear cress).